We begin with the raw amino-acid sequence, 309 residues long: tRNA dimethylallyltransferase (309 aa).

9–16 (GPTAIGKT) is an ATP binding site. A substrate-binding site is contributed by 11–16 (TAIGKT). Interaction with substrate tRNA regions lie at residues 34 to 37 (DSRQ) and 164 to 168 (QRMMR).

The protein belongs to the IPP transferase family. In terms of assembly, monomer. Requires Mg(2+) as cofactor.

It catalyses the reaction adenosine(37) in tRNA + dimethylallyl diphosphate = N(6)-dimethylallyladenosine(37) in tRNA + diphosphate. Catalyzes the transfer of a dimethylallyl group onto the adenine at position 37 in tRNAs that read codons beginning with uridine, leading to the formation of N6-(dimethylallyl)adenosine (i(6)A). The sequence is that of tRNA dimethylallyltransferase from Flavobacterium johnsoniae (strain ATCC 17061 / DSM 2064 / JCM 8514 / BCRC 14874 / CCUG 350202 / NBRC 14942 / NCIMB 11054 / UW101) (Cytophaga johnsonae).